A 189-amino-acid chain; its full sequence is Crossover junction endodeoxyribonuclease RuvC (189 aa).

Active-site residues include Asp9, Glu70, and Asp143. 3 residues coordinate Mg(2+): Asp9, Glu70, and Asp143. Over residues Met162–Trp178 the composition is skewed to low complexity. Residues Met162–Arg189 form a disordered region. The segment covering Ala179–Arg189 has biased composition (basic and acidic residues).

The protein belongs to the RuvC family. As to quaternary structure, homodimer which binds Holliday junction (HJ) DNA. The HJ becomes 2-fold symmetrical on binding to RuvC with unstacked arms; it has a different conformation from HJ DNA in complex with RuvA. In the full resolvosome a probable DNA-RuvA(4)-RuvB(12)-RuvC(2) complex forms which resolves the HJ. The cofactor is Mg(2+).

It localises to the cytoplasm. It catalyses the reaction Endonucleolytic cleavage at a junction such as a reciprocal single-stranded crossover between two homologous DNA duplexes (Holliday junction).. Its function is as follows. The RuvA-RuvB-RuvC complex processes Holliday junction (HJ) DNA during genetic recombination and DNA repair. Endonuclease that resolves HJ intermediates. Cleaves cruciform DNA by making single-stranded nicks across the HJ at symmetrical positions within the homologous arms, yielding a 5'-phosphate and a 3'-hydroxyl group; requires a central core of homology in the junction. The consensus cleavage sequence is 5'-(A/T)TT(C/G)-3'. Cleavage occurs on the 3'-side of the TT dinucleotide at the point of strand exchange. HJ branch migration catalyzed by RuvA-RuvB allows RuvC to scan DNA until it finds its consensus sequence, where it cleaves and resolves the cruciform DNA. The chain is Crossover junction endodeoxyribonuclease RuvC from Paenarthrobacter aurescens (strain TC1).